A 197-amino-acid chain; its full sequence is ATP-dependent Clp protease proteolytic subunit (197 aa).

Serine 98 serves as the catalytic Nucleophile. Histidine 123 is a catalytic residue.

It belongs to the peptidase S14 family. Fourteen ClpP subunits assemble into 2 heptameric rings which stack back to back to give a disk-like structure with a central cavity, resembling the structure of eukaryotic proteasomes.

The protein resides in the cytoplasm. It carries out the reaction Hydrolysis of proteins to small peptides in the presence of ATP and magnesium. alpha-casein is the usual test substrate. In the absence of ATP, only oligopeptides shorter than five residues are hydrolyzed (such as succinyl-Leu-Tyr-|-NHMec, and Leu-Tyr-Leu-|-Tyr-Trp, in which cleavage of the -Tyr-|-Leu- and -Tyr-|-Trp bonds also occurs).. Functionally, cleaves peptides in various proteins in a process that requires ATP hydrolysis. Has a chymotrypsin-like activity. Plays a major role in the degradation of misfolded proteins. This Pediococcus pentosaceus (strain ATCC 25745 / CCUG 21536 / LMG 10740 / 183-1w) protein is ATP-dependent Clp protease proteolytic subunit.